The primary structure comprises 129 residues: Phosphoribosyl-AMP cyclohydrolase (129 aa).

Position 87 (Asp-87) interacts with Mg(2+). Residue Cys-88 coordinates Zn(2+). The Mg(2+) site is built by Asp-89 and Asp-91. Zn(2+) is bound by residues Cys-104 and Cys-111.

The protein belongs to the PRA-CH family. Homodimer. It depends on Mg(2+) as a cofactor. The cofactor is Zn(2+).

Its subcellular location is the cytoplasm. It carries out the reaction 1-(5-phospho-beta-D-ribosyl)-5'-AMP + H2O = 1-(5-phospho-beta-D-ribosyl)-5-[(5-phospho-beta-D-ribosylamino)methylideneamino]imidazole-4-carboxamide. The protein operates within amino-acid biosynthesis; L-histidine biosynthesis; L-histidine from 5-phospho-alpha-D-ribose 1-diphosphate: step 3/9. Its function is as follows. Catalyzes the hydrolysis of the adenine ring of phosphoribosyl-AMP. The polypeptide is Phosphoribosyl-AMP cyclohydrolase (Ruegeria sp. (strain TM1040) (Silicibacter sp.)).